The primary structure comprises 229 residues: E3 ubiquitin-protein ligase RNF114 (229 aa).

Residues 1 to 23 are disordered; the sequence is MAAAQPESRDGAAQSAKPASETD. Residues 30-69 form an RING-type zinc finger; sequence CPVCLEVFEKPVQVPCGHVFCSACLQECLKPKKPVCGVCR. Residues Cys-92 and Cys-95 each coordinate Zn(2+). The C2HC RNF-type zinc-finger motif lies at 92–111; it reads CHGCRKNFILSKIRAHVTSC. Lys-103 carries the N6-acetyllysine modification. His-107 and Cys-111 together coordinate Zn(2+). Residue Lys-113 is modified to N6-acetyllysine.

Interacts with XAF1, the interaction increases XAF1 stability and proapoptotic effects, and may regulate IFN signaling. In terms of processing, autoubiquitinated. Polyubiquitinated in the presence of E2 enzymes UBE2D1, UBE2D2 and UBE2D3, but only monoubiquitinated in the presence of UBE2E1.

Its subcellular location is the cytoplasm. The protein resides in the nucleus. The enzyme catalyses S-ubiquitinyl-[E2 ubiquitin-conjugating enzyme]-L-cysteine + [acceptor protein]-L-lysine = [E2 ubiquitin-conjugating enzyme]-L-cysteine + N(6)-ubiquitinyl-[acceptor protein]-L-lysine.. Its pathway is protein modification; protein ubiquitination. E3 ubiquitin-protein ligase that promotes the ubiquitination of various substrates. In turn, participates in the regulation of many biological processes including cell cycle, apoptosis, osteoclastogenesis as well as innate or adaptive immunity. Acts as negative regulator of NF-kappa-B-dependent transcription by promoting the ubiquitination and stabilization of the NF-kappa-B inhibitor TNFAIP3. May promote the ubiquitination of TRAF6 as well. Also acts as a negative regulator of T-cell activation. Inhibits cellular dsRNA responses and interferon production by targeting MAVS component for proteasomal degradation. Ubiquitinates the CDK inhibitor CDKN1A leading to its degradationand probably also CDKN1B and CDKN1C. This activity stimulates cell cycle G1-to-S phase transition and suppresses cellular senescence. May play a role in spermatogenesis. This Mus musculus (Mouse) protein is E3 ubiquitin-protein ligase RNF114 (Rnf114).